Consider the following 152-residue polypeptide: Erythema protein SVEP (152 aa).

The N-terminal stretch at 1 to 18 is a signal peptide; that stretch reads MSITQSFFVLTLAIFGAA.

In terms of tissue distribution, salivary gland (at protein level).

The protein resides in the secreted. Functionally, salivary vasoactive peptide; induces vasodilatation in bioassay with rabbit aortic rings. The protein is Erythema protein SVEP of Simulium vittatum (Striped black fly).